The following is a 145-amino-acid chain: Putative antiporter subunit mnhG2 (145 aa).

A run of 3 helical transmembrane segments spans residues 11-31, 51-71, and 72-92; these read IAAV…IGIV, VLLT…FFSV, and RLLL…HLVA.

It belongs to the CPA3 antiporters (TC 2.A.63) subunit G family. May form a heterooligomeric complex that consists of seven subunits: mnhA2, mnhB2, mnhC2, mnhD2, mnhE2, mnhF2 and mnhG2.

It localises to the cell membrane. The sequence is that of Putative antiporter subunit mnhG2 (mnhG2) from Staphylococcus aureus (strain JH9).